The following is a 305-amino-acid chain: Maximins-S type B/C (305 aa).

The first 18 residues, 1–18 (MNFNYFILVLFFITSGHA), serve as a signal peptide directing secretion. 2 propeptides span residues 19-35 (KSET…HIKR) and 52-65 (SAEE…LVTR). An Asparagine amide modification is found at Asn-83. A propeptide spanning residues 87–100 (SAEEQDLAEHLVTR) is cleaved from the precursor. Asn-118 is modified (asparagine amide). Residues 122-135 (SAEEQDLAEDLVTR) constitute a propeptide that is removed on maturation. The residue at position 153 (Lys-153) is a Lysine amide. A propeptide spanning residues 157–170 (SAEDQDLAEDLVTR) is cleaved from the precursor. Asn-188 carries the asparagine amide modification. Positions 192–205 (SAEEQDLAEHLVTR) are excised as a propeptide. Asn-223 carries the post-translational modification Asparagine amide. A propeptide spanning residues 227–240 (SAEEQDLSEDLVTR) is cleaved from the precursor. Asn-258 carries the asparagine amide modification. The propeptide occupies 262-275 (SAEEQDLVEDLVTR). Position 293 is a lysine amide (Lys-293). Residues 297–305 (SAEQEKDMK) constitute a propeptide that is removed on maturation.

It belongs to the maximin-S family. In terms of tissue distribution, expressed by the skin dorsal glands.

It is found in the secreted. Maximin-S1 has no antimicrobial activity. Has no hemolytic activity. In terms of biological role, maximin-S2 has an activity against mycoplasma but has no activity against common Gram-positive and Gram-negative bacteria nor fungi. Has no hemolytic activity. Its function is as follows. Maximin-S3 has an activity against mycoplasma but has no activity against common Gram-positive and Gram-negative bacteria nor fungi. Has no hemolytic activity. Functionally, maximin-S4 has an activity against mycoplasma but has no activity against common Gram-positive and Gram-negative bacteria nor fungi. Has no hemolytic activity. Maximin-S5 has an activity against mycoplasma but has no activity against common Gram-positive and Gram-negative bacteria nor fungi. Has no hemolytic activity. The protein is Maximins-S type B/C of Bombina maxima (Giant fire-bellied toad).